Reading from the N-terminus, the 638-residue chain is Threonine--tRNA ligase (638 aa).

Positions Met-1–Thr-61 constitute a TGS domain. Positions Asp-242–Pro-533 are catalytic. Zn(2+)-binding residues include Cys-333, His-384, and His-510.

The protein belongs to the class-II aminoacyl-tRNA synthetase family. In terms of assembly, homodimer. Zn(2+) is required as a cofactor.

It is found in the cytoplasm. The catalysed reaction is tRNA(Thr) + L-threonine + ATP = L-threonyl-tRNA(Thr) + AMP + diphosphate + H(+). In terms of biological role, catalyzes the attachment of threonine to tRNA(Thr) in a two-step reaction: L-threonine is first activated by ATP to form Thr-AMP and then transferred to the acceptor end of tRNA(Thr). Also edits incorrectly charged L-seryl-tRNA(Thr). In Prochlorococcus marinus (strain MIT 9515), this protein is Threonine--tRNA ligase.